Reading from the N-terminus, the 449-residue chain is 3-phosphoshikimate 1-carboxyvinyltransferase (449 aa).

Residues 1 to 23 form a disordered region; sequence MSHSASPKPATARRSEALTGEIR. Residues K28, S29, and R33 each contribute to the 3-phosphoshikimate site. Phosphoenolpyruvate is bound at residue K28. G100 and R128 together coordinate phosphoenolpyruvate. Residues S173, Q175, D326, and K353 each coordinate 3-phosphoshikimate. Q175 is a binding site for phosphoenolpyruvate. Catalysis depends on D326, which acts as the Proton acceptor. Residues R357 and R402 each coordinate phosphoenolpyruvate.

The protein belongs to the EPSP synthase family. In terms of assembly, monomer.

The protein localises to the cytoplasm. The catalysed reaction is 3-phosphoshikimate + phosphoenolpyruvate = 5-O-(1-carboxyvinyl)-3-phosphoshikimate + phosphate. Its pathway is metabolic intermediate biosynthesis; chorismate biosynthesis; chorismate from D-erythrose 4-phosphate and phosphoenolpyruvate: step 6/7. In terms of biological role, catalyzes the transfer of the enolpyruvyl moiety of phosphoenolpyruvate (PEP) to the 5-hydroxyl of shikimate-3-phosphate (S3P) to produce enolpyruvyl shikimate-3-phosphate and inorganic phosphate. This Pseudomonas sp. (strain PG2982) protein is 3-phosphoshikimate 1-carboxyvinyltransferase.